The sequence spans 246 residues: Protein lin-37 homolog (246 aa).

Met-1 bears the N-acetylmethionine mark. Residues Lys-5 and Lys-7 each participate in a glycyl lysine isopeptide (Lys-Gly) (interchain with G-Cter in SUMO2) cross-link. A compositionally biased stretch (basic and acidic residues) spans 39 to 55 (RLDEEAGKTPLDTHNKD). Disordered stretches follow at residues 39-90 (RLDE…GGPQ) and 129-208 (VRER…TLIY). 2 positions are modified to phosphoserine: Ser-135 and Ser-138. Thr-167 carries the post-translational modification Phosphothreonine. Ser-182 and Ser-202 each carry phosphoserine.

As to quaternary structure, component of the DREAM complex (also named LINC complex) at least composed of E2F4, E2F5, LIN9, LIN37, LIN52, LIN54, MYBL1, MYBL2, RBL1, RBL2, RBBP4, TFDP1 and TFDP2. The complex exists in quiescent cells where it represses cell cycle-dependent genes. It dissociates in S phase when LIN9, LIN37, LIN52 and LIN54 form a subcomplex that binds to MYBL2.

The polypeptide is Protein lin-37 homolog (Lin37) (Mus musculus (Mouse)).